Here is a 214-residue protein sequence, read N- to C-terminus: Octanoyltransferase (214 aa).

The 177-residue stretch at 35–211 folds into the BPL/LPL catalytic domain; that stretch reads KSNIDFIWLG…IIQEEFYFNF (177 aa). Substrate is bound by residues 75 to 82, 142 to 144, and 155 to 157; these read RGGEVTCH, SIG, and GFS. Catalysis depends on Cys-173, which acts as the Acyl-thioester intermediate.

This sequence belongs to the LipB family.

It localises to the cytoplasm. It carries out the reaction octanoyl-[ACP] + L-lysyl-[protein] = N(6)-octanoyl-L-lysyl-[protein] + holo-[ACP] + H(+). The protein operates within protein modification; protein lipoylation via endogenous pathway; protein N(6)-(lipoyl)lysine from octanoyl-[acyl-carrier-protein]: step 1/2. Catalyzes the transfer of endogenously produced octanoic acid from octanoyl-acyl-carrier-protein onto the lipoyl domains of lipoate-dependent enzymes. Lipoyl-ACP can also act as a substrate although octanoyl-ACP is likely to be the physiological substrate. This chain is Octanoyltransferase, found in Prochlorococcus marinus (strain MIT 9515).